A 1875-amino-acid chain; its full sequence is COPII coat assembly protein sec16 (1875 aa).

7 disordered regions span residues 34 to 140 (PESR…QANG), 211 to 241 (EDKDAMPHGEISNDRPGFWGNLGNDGRDNED), 258 to 814 (PETE…YAPS), 835 to 868 (GTQNVAYAPPVGESPFVPPRRSQTQSPSQQLLSP), 1413 to 1443 (SDAASTGSGKAEEIGPFAKVSGTPTVSRSPS), 1475 to 1717 (LSSS…IRAK), and 1733 to 1875 (WVNK…VMAK). Composition is skewed to basic and acidic residues over residues 93–116 (TELKDVLEQPRHIDGNDSSIHPDD) and 214–223 (DAMPHGEISN). 2 stretches are compositionally biased toward polar residues: residues 273–290 (NSPQTPVEQAQRGDNQLD) and 322–360 (KSTTQVLSTLDTTPDSPFSETSPTAQDFNQILADTSAQN). Composition is skewed to acidic residues over residues 378–391 (LSDDAEETMPPEDD) and 399–409 (ELDDDDDDLLL). 2 stretches are compositionally biased toward polar residues: residues 413 to 428 (STANNDQEAAQLNQDH) and 454 to 466 (ISYTPHQPSTSDL). A compositionally biased stretch (basic and acidic residues) spans 503–512 (SFAERSKEGY). Residues 539-559 (GNLPPPPPRSSSIPAPSPQPS) show a composition bias toward pro residues. Composition is skewed to low complexity over residues 596-607 (RPASSGRYTPNP) and 660-674 (LLAPAALGAPVVPGA). Pro residues-rich tracts occupy residues 692–702 (LPSPRYSPAPP) and 766–781 (GLPPPSHAQPFQPPVI). The segment covering 853-868 (PRRSQTQSPSQQLLSP) has biased composition (low complexity). Over residues 1434 to 1443 (GTPTVSRSPS) the composition is skewed to polar residues. A compositionally biased stretch (low complexity) spans 1484-1495 (GRSSLDSQRSSS). Polar residues-rich tracts occupy residues 1531–1541 (GYQSTPPQTSY), 1563–1572 (PSQTLDNVSP), and 1587–1599 (FETNDASATSQFE). A compositionally biased stretch (basic and acidic residues) spans 1661-1683 (KAERARRDREADEAFRKAAEADA). Over residues 1775 to 1785 (TPPLAALGAGS) the composition is skewed to low complexity.

Belongs to the SEC16 family.

It localises to the endoplasmic reticulum membrane. Involved in the initiation of assembly of the COPII coat required for the formation of transport vesicles from the endoplasmic reticulum (ER) and the selection of cargo molecules. Also involved in autophagy. The polypeptide is COPII coat assembly protein sec16 (sec16) (Aspergillus clavatus (strain ATCC 1007 / CBS 513.65 / DSM 816 / NCTC 3887 / NRRL 1 / QM 1276 / 107)).